Reading from the N-terminus, the 444-residue chain is tRNA-2-methylthio-N(6)-dimethylallyladenosine synthase (444 aa).

Residues 6 to 124 (KTFKIITYGC…LPQLIEEIKA (119 aa)) form the MTTase N-terminal domain. [4Fe-4S] cluster contacts are provided by cysteine 15, cysteine 51, cysteine 85, cysteine 161, cysteine 165, and cysteine 168. Residues 147-377 (RARGAQAFVT…MELQNSISLA (231 aa)) form the Radical SAM core domain. Residues 380–443 (EALVGQEVEV…TWLLKGEMVD (64 aa)) form the TRAM domain.

Belongs to the methylthiotransferase family. MiaB subfamily. In terms of assembly, monomer. The cofactor is [4Fe-4S] cluster.

The protein localises to the cytoplasm. The catalysed reaction is N(6)-dimethylallyladenosine(37) in tRNA + (sulfur carrier)-SH + AH2 + 2 S-adenosyl-L-methionine = 2-methylsulfanyl-N(6)-dimethylallyladenosine(37) in tRNA + (sulfur carrier)-H + 5'-deoxyadenosine + L-methionine + A + S-adenosyl-L-homocysteine + 2 H(+). In terms of biological role, catalyzes the methylthiolation of N6-(dimethylallyl)adenosine (i(6)A), leading to the formation of 2-methylthio-N6-(dimethylallyl)adenosine (ms(2)i(6)A) at position 37 in tRNAs that read codons beginning with uridine. This chain is tRNA-2-methylthio-N(6)-dimethylallyladenosine synthase, found in Moorella thermoacetica (strain ATCC 39073 / JCM 9320).